Consider the following 859-residue polypeptide: DNA mismatch repair protein MutS (859 aa).

612–619 (GPNMGGKS) provides a ligand contact to ATP. Positions 797–822 (SKPLAPSATPPSSYAAPSPAAAPAQA) are disordered.

This sequence belongs to the DNA mismatch repair MutS family.

Its function is as follows. This protein is involved in the repair of mismatches in DNA. It is possible that it carries out the mismatch recognition step. This protein has a weak ATPase activity. The polypeptide is DNA mismatch repair protein MutS (Alcanivorax borkumensis (strain ATCC 700651 / DSM 11573 / NCIMB 13689 / SK2)).